Consider the following 798-residue polypeptide: Integrin beta-7 (798 aa).

Residues methionine 1–serine 19 form the signal peptide. The Extracellular portion of the chain corresponds to glutamate 20 to histidine 723. In terms of domain architecture, PSI spans serine 44–proline 92. 7 cysteine pairs are disulfide-bonded: cysteine 51/cysteine 476, cysteine 54/cysteine 80, cysteine 64/cysteine 91, cysteine 216/cysteine 223, cysteine 271/cysteine 311, cysteine 412/cysteine 428, and cysteine 448/cysteine 474. An N-linked (GlcNAc...) asparagine glycan is attached at asparagine 68. Positions glutamate 98–alanine 124 are disordered. One can recognise a VWFA domain in the interval tyrosine 150–leucine 389. Serine 161 and serine 163 together coordinate Mg(2+). Positions 163, 166, 167, and 198 each coordinate Ca(2+). Asparagine 254, aspartate 256, proline 258, and glutamate 259 together coordinate Ca(2+). Glutamate 259 lines the Mg(2+) pocket. N-linked (GlcNAc...) asparagine glycosylation occurs at asparagine 279. Ca(2+)-binding residues include aspartate 289 and glutamate 373. Asparagine 434 carries an N-linked (GlcNAc...) asparagine glycan. N-linked (GlcNAc...) asparagine glycosylation occurs at asparagine 477. Disulfide bonds link cysteine 478/cysteine 497, cysteine 488/cysteine 500, cysteine 502/cysteine 511, cysteine 513/cysteine 545, cysteine 527/cysteine 543, cysteine 537/cysteine 548, cysteine 550/cysteine 559, cysteine 561/cysteine 582, cysteine 566/cysteine 580, cysteine 574/cysteine 585, cysteine 587/cysteine 596, cysteine 598/cysteine 621, cysteine 605/cysteine 619, cysteine 613/cysteine 624, cysteine 626/cysteine 635, cysteine 638/cysteine 641, cysteine 645/cysteine 688, cysteine 651/cysteine 670, and cysteine 654/cysteine 666. I-EGF domains lie at cysteine 478–glutamate 512, cysteine 513–glutamate 560, cysteine 561–glutamate 597, and cysteine 598–aspartate 636. Residue asparagine 531 is glycosylated (N-linked (GlcNAc...) asparagine). A glycan (N-linked (GlcNAc...) asparagine) is linked at asparagine 590. Asparagine 665 and asparagine 674 each carry an N-linked (GlcNAc...) asparagine glycan. The chain crosses the membrane as a helical span at residues threonine 724–tyrosine 746. Topologically, residues arginine 747–leucine 798 are cytoplasmic. Tyrosine 778 is subject to Phosphotyrosine; by Tyr-kinases.

Belongs to the integrin beta chain family. In terms of assembly, heterodimer of an alpha and a beta subunit. ITGB7/beta-7 associates with either ITGA4/alpha-4 or ITGAE/alpha-E. Integrin ITGA4/ITGB7 interacts with MADCAM1. Integrin ITGA4/ITGB7 interacts with VCAM1 and fibronectin. Interacts with FLNA (via filamin repeats 4, 9, 12, 17, 19, 21, and 23). (Microbial infection) May interact with HIV-1 gp120. In terms of tissue distribution, expressed in a variety of leukocyte lines.

The protein localises to the cell membrane. Functionally, integrin ITGA4/ITGB7 (alpha-4/beta-7) (Peyer patches-specific homing receptor LPAM-1) is an adhesion molecule that mediates lymphocyte migration and homing to gut-associated lymphoid tissue (GALT). Integrin ITGA4/ITGB7 interacts with the cell surface adhesion molecules MADCAM1 which is normally expressed by the vascular endothelium of the gastrointestinal tract. Also interacts with VCAM1 and fibronectin, an extracellular matrix component. It recognizes one or more domains within the alternatively spliced CS-1 region of fibronectin. Interactions involve the tripeptide L-D-T in MADCAM1, and L-D-V in fibronectin. Integrin ITGAE/ITGB7 (alpha-E/beta-7, HML-1) is a receptor for E-cadherin. Its function is as follows. (Microbial infection) Binds to HIV-1 gp120, thereby allowing the virus to enter GALT, which is thought to be the major trigger of AIDS disease. Interaction would involve a tripeptide L-D-I in HIV-1 gp120. This Homo sapiens (Human) protein is Integrin beta-7 (ITGB7).